The primary structure comprises 85 residues: Large ribosomal subunit protein bL27 (85 aa).

Belongs to the bacterial ribosomal protein bL27 family.

This is Large ribosomal subunit protein bL27 from Pseudomonas aeruginosa (strain LESB58).